The chain runs to 507 residues: ATP synthase subunit alpha, chloroplastic (507 aa).

Residue 170–177 (GDRQTGKT) coordinates ATP. 3 disordered regions span residues 278–325 (PRRP…TQAG), 392–430 (EPEASAQFASDPDKATRNQSARGQRSRELLKQSQPAPLP), and 452–471 (GQVQGSPAQSREYLVTNKPE). Residues 282–303 (PGREAHPGDVPHLHPRPPERAA) are compositionally biased toward basic and acidic residues. Residues 305–322 (LSSQPGEGSTTASPTVET) show a composition bias toward polar residues.

It belongs to the ATPase alpha/beta chains family. F-type ATPases have 2 components, CF(1) - the catalytic core - and CF(0) - the membrane proton channel. CF(1) has five subunits: alpha(3), beta(3), gamma(1), delta(1), epsilon(1). CF(0) has four main subunits: a, b, b' and c.

It localises to the plastid. Its subcellular location is the chloroplast thylakoid membrane. It catalyses the reaction ATP + H2O + 4 H(+)(in) = ADP + phosphate + 5 H(+)(out). Its function is as follows. Produces ATP from ADP in the presence of a proton gradient across the membrane. The alpha chain is a regulatory subunit. The protein is ATP synthase subunit alpha, chloroplastic of Selaginella uncinata (Blue spike-moss).